A 296-amino-acid polypeptide reads, in one-letter code: Fructose-bisphosphate aldolase class 1 (296 aa).

The active-site Proton acceptor is the Glu175. Lys212 acts as the Schiff-base intermediate with dihydroxyacetone-P in catalysis.

The protein belongs to the class I fructose-bisphosphate aldolase family.

It catalyses the reaction beta-D-fructose 1,6-bisphosphate = D-glyceraldehyde 3-phosphate + dihydroxyacetone phosphate. Its pathway is carbohydrate degradation; glycolysis; D-glyceraldehyde 3-phosphate and glycerone phosphate from D-glucose: step 4/4. This Staphylococcus aureus (strain Mu3 / ATCC 700698) protein is Fructose-bisphosphate aldolase class 1.